Consider the following 2158-residue polypeptide: RNA1 polyprotein (2158 aa).

The propeptide at 1-105 (MSFSKMFPGF…VASMYKSICD (105 aa)) is removed in mature form. The 168-residue stretch at 367–534 (DKIYGENCQH…GEFNTDAPTS (168 aa)) folds into the SF3 helicase domain. 393 to 400 (GASGCGKS) serves as a coordination point for ATP. Residues 801–821 (GLILIALNGAFGAVTAFCACW) form a helical membrane-spanning segment. Position 844 is an O-(5'-phospho-RNA)-serine (Ser-844). The Peptidase C3 domain occupies 870–1083 (ASDDGFINEG…FVASNATAIF (214 aa)). Residues His-910, Asp-946, and Cys-1041 each act as for picornain 3C-like protease activity in the active site. Positions 1376–1511 (DTGFSADYSS…AVPMELHWYT (136 aa)) constitute a RdRp catalytic domain.

It localises to the host membrane. The enzyme catalyses RNA(n) + a ribonucleoside 5'-triphosphate = RNA(n+1) + diphosphate. Picornain 3C-like protease is a thiol protease that probably cleaves the polyprotein. This chain is RNA1 polyprotein, found in Capsicum annuum (Capsicum pepper).